A 468-amino-acid chain; its full sequence is 6-phospho-beta-galactosidase (468 aa).

The D-galactose 6-phosphate site is built by Gln19, His116, Asn159, Glu160, and Asn297. The active-site Proton donor is the Glu160. The active-site Nucleophile is Glu375. Ser428, Trp429, Lys435, and Tyr437 together coordinate D-galactose 6-phosphate.

Belongs to the glycosyl hydrolase 1 family.

The catalysed reaction is a 6-phospho-beta-D-galactoside + H2O = D-galactose 6-phosphate + an alcohol. It functions in the pathway carbohydrate metabolism; lactose degradation; D-galactose 6-phosphate and beta-D-glucose from lactose 6-phosphate: step 1/1. This Streptococcus pyogenes serotype M3 (strain ATCC BAA-595 / MGAS315) protein is 6-phospho-beta-galactosidase.